We begin with the raw amino-acid sequence, 311 residues long: Ribosomal RNA small subunit methyltransferase H (311 aa).

S-adenosyl-L-methionine-binding positions include 32-34 (AGH), aspartate 52, phenylalanine 79, aspartate 100, and glutamine 107. A compositionally biased stretch (basic and acidic residues) spans 289–298 (SKEELEENNR). The disordered stretch occupies residues 289 to 311 (SKEELEENNRARSAKLRIAEKRK). The segment covering 300 to 311 (RSAKLRIAEKRK) has biased composition (basic residues).

This sequence belongs to the methyltransferase superfamily. RsmH family.

It is found in the cytoplasm. It catalyses the reaction cytidine(1402) in 16S rRNA + S-adenosyl-L-methionine = N(4)-methylcytidine(1402) in 16S rRNA + S-adenosyl-L-homocysteine + H(+). In terms of biological role, specifically methylates the N4 position of cytidine in position 1402 (C1402) of 16S rRNA. In Bacillus velezensis (strain DSM 23117 / BGSC 10A6 / LMG 26770 / FZB42) (Bacillus amyloliquefaciens subsp. plantarum), this protein is Ribosomal RNA small subunit methyltransferase H.